The sequence spans 125 residues: Ribosome-binding factor A (125 aa).

It belongs to the RbfA family. Monomer. Binds 30S ribosomal subunits, but not 50S ribosomal subunits or 70S ribosomes.

The protein localises to the cytoplasm. In terms of biological role, one of several proteins that assist in the late maturation steps of the functional core of the 30S ribosomal subunit. Associates with free 30S ribosomal subunits (but not with 30S subunits that are part of 70S ribosomes or polysomes). Required for efficient processing of 16S rRNA. May interact with the 5'-terminal helix region of 16S rRNA. This chain is Ribosome-binding factor A, found in Xylella fastidiosa (strain M23).